The following is a 275-amino-acid chain: 2,3,4,5-tetrahydropyridine-2,6-dicarboxylate N-succinyltransferase (275 aa).

The protein belongs to the transferase hexapeptide repeat family.

It is found in the cytoplasm. The enzyme catalyses (S)-2,3,4,5-tetrahydrodipicolinate + succinyl-CoA + H2O = (S)-2-succinylamino-6-oxoheptanedioate + CoA. It participates in amino-acid biosynthesis; L-lysine biosynthesis via DAP pathway; LL-2,6-diaminopimelate from (S)-tetrahydrodipicolinate (succinylase route): step 1/3. This chain is 2,3,4,5-tetrahydropyridine-2,6-dicarboxylate N-succinyltransferase, found in Paraburkholderia phytofirmans (strain DSM 17436 / LMG 22146 / PsJN) (Burkholderia phytofirmans).